Consider the following 572-residue polypeptide: Light-independent protochlorophyllide reductase subunit N (572 aa).

3 residues coordinate [4Fe-4S] cluster: C106, C131, and C191. Residues 249–268 form a disordered region; the sequence is SLDSMKLPSGGREKQINDVN.

It belongs to the BchN/ChlN family. Protochlorophyllide reductase is composed of three subunits; ChlL, ChlN and ChlB. Forms a heterotetramer of two ChlB and two ChlN subunits. The cofactor is [4Fe-4S] cluster.

Its subcellular location is the plastid. The protein resides in the chloroplast. It carries out the reaction chlorophyllide a + oxidized 2[4Fe-4S]-[ferredoxin] + 2 ADP + 2 phosphate = protochlorophyllide a + reduced 2[4Fe-4S]-[ferredoxin] + 2 ATP + 2 H2O. Its pathway is porphyrin-containing compound metabolism; chlorophyll biosynthesis (light-independent). In terms of biological role, component of the dark-operative protochlorophyllide reductase (DPOR) that uses Mg-ATP and reduced ferredoxin to reduce ring D of protochlorophyllide (Pchlide) to form chlorophyllide a (Chlide). This reaction is light-independent. The NB-protein (ChlN-ChlB) is the catalytic component of the complex. In Oltmannsiellopsis viridis (Marine flagellate), this protein is Light-independent protochlorophyllide reductase subunit N.